The chain runs to 419 residues: UDP-N-acetylglucosamine 1-carboxyvinyltransferase (419 aa).

Residue 22-23 (KN) participates in phosphoenolpyruvate binding. Position 93 (arginine 93) interacts with UDP-N-acetyl-alpha-D-glucosamine. Catalysis depends on cysteine 117, which acts as the Proton donor. Residue cysteine 117 is modified to 2-(S-cysteinyl)pyruvic acid O-phosphothioketal. UDP-N-acetyl-alpha-D-glucosamine contacts are provided by aspartate 307 and isoleucine 329.

It belongs to the EPSP synthase family. MurA subfamily.

It is found in the cytoplasm. It carries out the reaction phosphoenolpyruvate + UDP-N-acetyl-alpha-D-glucosamine = UDP-N-acetyl-3-O-(1-carboxyvinyl)-alpha-D-glucosamine + phosphate. The protein operates within cell wall biogenesis; peptidoglycan biosynthesis. Functionally, cell wall formation. Adds enolpyruvyl to UDP-N-acetylglucosamine. The sequence is that of UDP-N-acetylglucosamine 1-carboxyvinyltransferase from Shewanella woodyi (strain ATCC 51908 / MS32).